Reading from the N-terminus, the 272-residue chain is Tryptophan synthase alpha chain (272 aa).

Residues Glu49 and Asp60 each act as proton acceptor in the active site.

The protein belongs to the TrpA family. In terms of assembly, tetramer of two alpha and two beta chains.

The enzyme catalyses (1S,2R)-1-C-(indol-3-yl)glycerol 3-phosphate + L-serine = D-glyceraldehyde 3-phosphate + L-tryptophan + H2O. It participates in amino-acid biosynthesis; L-tryptophan biosynthesis; L-tryptophan from chorismate: step 5/5. The alpha subunit is responsible for the aldol cleavage of indoleglycerol phosphate to indole and glyceraldehyde 3-phosphate. In Methylibium petroleiphilum (strain ATCC BAA-1232 / LMG 22953 / PM1), this protein is Tryptophan synthase alpha chain.